A 449-amino-acid chain; its full sequence is Tubulin beta-8 chain (449 aa).

8 residues coordinate GTP: glutamine 11, glutamate 69, serine 138, glycine 142, threonine 143, glycine 144, asparagine 204, and asparagine 226. Glutamate 69 is a binding site for Mg(2+). The segment at 428-449 (ATADEEEGYEYEEDEVEVQEEQ) is disordered. Residues 429 to 449 (TADEEEGYEYEEDEVEVQEEQ) show a composition bias toward acidic residues.

The protein belongs to the tubulin family. As to quaternary structure, dimer of alpha and beta chains. A typical microtubule is a hollow water-filled tube with an outer diameter of 25 nm and an inner diameter of 15 nM. Alpha-beta heterodimers associate head-to-tail to form protofilaments running lengthwise along the microtubule wall with the beta-tubulin subunit facing the microtubule plus end conferring a structural polarity. Microtubules usually have 13 protofilaments but different protofilament numbers can be found in some organisms and specialized cells. It depends on Mg(2+) as a cofactor.

It localises to the cytoplasm. The protein resides in the cytoskeleton. Tubulin is the major constituent of microtubules, a cylinder consisting of laterally associated linear protofilaments composed of alpha- and beta-tubulin heterodimers. Microtubules grow by the addition of GTP-tubulin dimers to the microtubule end, where a stabilizing cap forms. Below the cap, tubulin dimers are in GDP-bound state, owing to GTPase activity of alpha-tubulin. The protein is Tubulin beta-8 chain (TUBB8) of Arabidopsis thaliana (Mouse-ear cress).